Here is a 307-residue protein sequence, read N- to C-terminus: MSEHHVNIPAPQFSTYATVIDPPKHVTATHPDELTTASHPQPTHPSAPQDPSPAVPSTPVRVPYPTAPPPIPPAPEAVTAGPKKMALAPSSTKTYKQKRTFKVIIVGNAAVGKTCLSFRFCCGRFPEHTEATIGVDFRERSCVIENELLRVQLWDTAGQERYRQSIVAHYYRNVNAVVFVYDVTCRESFNDLALWIKECEKHGLVGDSEVPRILIGNKCDVECTNRVSTDEAQMFADRNNMALFETSAKLASEADHVESIFLTLLHKLQQSKPMHVQSQDERHQKEQERLILKANETENVEEEGFCC.

The interval 19–80 (VIDPPKHVTA…IPPAPEAVTA (62 aa)) is disordered. Pro residues-rich tracts occupy residues 42-56 (PTHP…PAVP) and 65-75 (PTAPPPIPPAP). GTP is bound at residue 107–114 (GNAAVGKT). The Effector region signature appears at 129–137 (TEATIGVDF). GTP is bound by residues 155 to 159 (DTAGQ) and 217 to 220 (NKCD). S-geranylgeranyl cysteine attachment occurs at residues C306 and C307.

Belongs to the small GTPase superfamily. Rab family.

It localises to the cell membrane. This Caenorhabditis elegans protein is Ras-related protein Rab-33 (rab-33).